A 158-amino-acid chain; its full sequence is 2-C-methyl-D-erythritol 2,4-cyclodiphosphate synthase (158 aa).

Aspartate 9 and histidine 11 together coordinate a divalent metal cation. 4-CDP-2-C-methyl-D-erythritol 2-phosphate is bound by residues 9–11 and 35–36; these read DVH and HS. Histidine 43 serves as a coordination point for a divalent metal cation. 4-CDP-2-C-methyl-D-erythritol 2-phosphate-binding positions include 57 to 59, 62 to 66, 101 to 107, 133 to 136, phenylalanine 140, and arginine 143; these read DIG, FPDTD, AQAPKMA, and TTTE.

Belongs to the IspF family. Homotrimer. A divalent metal cation is required as a cofactor.

It carries out the reaction 4-CDP-2-C-methyl-D-erythritol 2-phosphate = 2-C-methyl-D-erythritol 2,4-cyclic diphosphate + CMP. Its pathway is isoprenoid biosynthesis; isopentenyl diphosphate biosynthesis via DXP pathway; isopentenyl diphosphate from 1-deoxy-D-xylulose 5-phosphate: step 4/6. In terms of biological role, involved in the biosynthesis of isopentenyl diphosphate (IPP) and dimethylallyl diphosphate (DMAPP), two major building blocks of isoprenoid compounds. Catalyzes the conversion of 4-diphosphocytidyl-2-C-methyl-D-erythritol 2-phosphate (CDP-ME2P) to 2-C-methyl-D-erythritol 2,4-cyclodiphosphate (ME-CPP) with a corresponding release of cytidine 5-monophosphate (CMP). The protein is 2-C-methyl-D-erythritol 2,4-cyclodiphosphate synthase of Vibrio vulnificus (strain YJ016).